Consider the following 99-residue polypeptide: UPF0235 protein Neut_2146 (99 aa).

This sequence belongs to the UPF0235 family.

This Nitrosomonas eutropha (strain DSM 101675 / C91 / Nm57) protein is UPF0235 protein Neut_2146.